The following is a 143-amino-acid chain: Ribonuclease P protein component 2 (143 aa).

Belongs to the eukaryotic/archaeal RNase P protein component 2 family. Consists of a catalytic RNA component and at least 4-5 protein subunits.

It is found in the cytoplasm. The catalysed reaction is Endonucleolytic cleavage of RNA, removing 5'-extranucleotides from tRNA precursor.. Functionally, part of ribonuclease P, a protein complex that generates mature tRNA molecules by cleaving their 5'-ends. In Saccharolobus islandicus (strain L.S.2.15 / Lassen #1) (Sulfolobus islandicus), this protein is Ribonuclease P protein component 2.